The primary structure comprises 321 residues: Probable DNA polymerase III subunit delta (321 aa).

Belongs to the DNA polymerase HolA subunit family. As to quaternary structure, component of the DNA clamp loading complex consisting of tau(3):delta(1):delta'(1). The DNA polymerase III holoenzyme complex contains at least 10 different subunits organized into 3 functionally essential subassemblies: the Pol III core, the beta sliding clamp processivity factor and the clamp-loading complex. The Pol III core (subunits alpha, epsilon and theta) contains the polymerase and the 3'-5' exonuclease proofreading activities. The polymerase is tethered to the template via the dimeric beta sliding clamp processivity factor. The DNA clamp-loading complex assembles the beta sliding clamp onto the primed template and plays a central role in the organization and communication at the replication fork.

The catalysed reaction is DNA(n) + a 2'-deoxyribonucleoside 5'-triphosphate = DNA(n+1) + diphosphate. In terms of biological role, part of the beta sliding clamp loading complex, which hydrolyzes ATP to load the beta clamp onto primed DNA to form the DNA replication pre-initiation complex. DNA polymerase III is a complex, multichain enzyme responsible for most of the replicative synthesis in bacteria. This DNA polymerase also exhibits 3'-5' exonuclease activity. The delta subunit is the wrench that will open the beta subunit dimer. The DNA clamp loading complex (tau(3),delta,delta') is thought to load beta dimers onto DNA by binding ATP which alters the complex's conformation so it can bind beta sliding clamp dimers and open them at one interface. Primed DNA is recognized, ATP is hydrolyzed releasing the clamp loading complex and closing the beta sliding clamp ring around the primed DNA. This chain is Probable DNA polymerase III subunit delta, found in Rickettsia prowazekii (strain Madrid E).